Consider the following 491-residue polypeptide: Protein nucleotidyltransferase YdiU (491 aa).

ATP contacts are provided by Gly94, Gly96, Arg97, Lys117, Asp129, Gly130, Arg180, and Arg187. The Proton acceptor role is filled by Asp256. 2 residues coordinate Mg(2+): Asn257 and Asp266. Asp266 contributes to the ATP binding site.

Belongs to the SELO family. The cofactor is Mg(2+). It depends on Mn(2+) as a cofactor.

It catalyses the reaction L-seryl-[protein] + ATP = 3-O-(5'-adenylyl)-L-seryl-[protein] + diphosphate. It carries out the reaction L-threonyl-[protein] + ATP = 3-O-(5'-adenylyl)-L-threonyl-[protein] + diphosphate. The enzyme catalyses L-tyrosyl-[protein] + ATP = O-(5'-adenylyl)-L-tyrosyl-[protein] + diphosphate. The catalysed reaction is L-histidyl-[protein] + UTP = N(tele)-(5'-uridylyl)-L-histidyl-[protein] + diphosphate. It catalyses the reaction L-seryl-[protein] + UTP = O-(5'-uridylyl)-L-seryl-[protein] + diphosphate. It carries out the reaction L-tyrosyl-[protein] + UTP = O-(5'-uridylyl)-L-tyrosyl-[protein] + diphosphate. Nucleotidyltransferase involved in the post-translational modification of proteins. It can catalyze the addition of adenosine monophosphate (AMP) or uridine monophosphate (UMP) to a protein, resulting in modifications known as AMPylation and UMPylation. This Clostridium botulinum (strain Loch Maree / Type A3) protein is Protein nucleotidyltransferase YdiU.